The chain runs to 98 residues: UPF0213 protein in ldhD 5'region (98 aa).

Residues 7 to 84 enclose the GIY-YIG domain; the sequence is NGFYFYVLWC…KKQSRKEKLK (78 aa).

It belongs to the UPF0213 family.

This is UPF0213 protein in ldhD 5'region from Pediococcus acidilactici.